The chain runs to 79 residues: MKAPATTLILVMSLISVLWATPDLEEGDLLAELGDLIATDDEYPMKPEERGCKLTFWKCKNKKECCGWNACALGICMPR.

A signal peptide spans 1–20 (MKAPATTLILVMSLISVLWA). Residues 21–50 (TPDLEEGDLLAELGDLIATDDEYPMKPEER) constitute a propeptide that is removed on maturation. Cystine bridges form between Cys52–Cys66, Cys59–Cys71, and Cys65–Cys76.

The protein belongs to the neurotoxin 15 family. 01 (magi-5) subfamily. Expressed by the venom gland.

It localises to the secreted. Its function is as follows. Insect and vertebrate active toxin. Binds to site 4 of mammalian voltage-gated sodium channels and shifts the activation voltage of the mammalian Nav1.2a/SCN2A channel to more hyperpolarized voltages, whereas the insect channel, DmNav1 (para), is not affected. Competes for binding at site 3 of the insect sodium channel. Causes temporary paralysis when injected into lepidopteran larvae at 8.6 nmol/g. A low intracranial injection dose into mice causes lacrimation, closure of the eyes and sweating. A high injection dose causes extensive lacrimation and death. The sequence is that of Beta-hexatoxin-Mg1a from Macrothele gigas (Japanese funnel web spider).